A 252-amino-acid chain; its full sequence is AA9 family lytic polysaccharide monooxygenase B (252 aa).

The signal sequence occupies residues 1–20 (MVSFTKTFFAIVACALGVQA). Residues His-21 and His-106 each coordinate Cu(2+). Cys-72 and Cys-198 are joined by a disulfide. An N-linked (GlcNAc...) asparagine glycan is attached at Asn-158. The O2 site is built by His-184 and Gln-193. Residue Tyr-195 participates in Cu(2+) binding. Asn-237 carries an N-linked (GlcNAc...) asparagine glycan.

Belongs to the polysaccharide monooxygenase AA9 family. It depends on Cu(2+) as a cofactor.

It is found in the secreted. It catalyses the reaction [(1-&gt;4)-beta-D-glucosyl]n+m + reduced acceptor + O2 = 4-dehydro-beta-D-glucosyl-[(1-&gt;4)-beta-D-glucosyl]n-1 + [(1-&gt;4)-beta-D-glucosyl]m + acceptor + H2O.. Its function is as follows. Lytic polysaccharide monooxygenase (LPMO) that depolymerizes crystalline and amorphous polysaccharides via the oxidation of scissile alpha- or beta-(1-4)-glycosidic bonds, yielding C1 or C4 oxidation products. Catalysis by LPMOs requires the reduction of the active-site copper from Cu(II) to Cu(I) by a reducing agent and H(2)O(2) or O(2) as a cosubstrate. The synergistic activity of LPMO9B with xylanase Xyl10G or cellulase Cel5B shows efficient bioconversion rates of 56 and 174 percent in pretreated kenaf (Hibiscus cannabinus) and oak, respectively. The chain is AA9 family lytic polysaccharide monooxygenase B from Gloeophyllum trabeum (strain ATCC 11539 / FP-39264 / Madison 617) (Brown rot fungus).